The primary structure comprises 298 residues: Homoserine kinase (298 aa).

83–93 (PISRGLGSSSS) lines the ATP pocket.

Belongs to the GHMP kinase family. Homoserine kinase subfamily.

Its subcellular location is the cytoplasm. The catalysed reaction is L-homoserine + ATP = O-phospho-L-homoserine + ADP + H(+). It functions in the pathway amino-acid biosynthesis; L-threonine biosynthesis; L-threonine from L-aspartate: step 4/5. In terms of biological role, catalyzes the ATP-dependent phosphorylation of L-homoserine to L-homoserine phosphate. The polypeptide is Homoserine kinase (Clostridium botulinum (strain Eklund 17B / Type B)).